Here is a 613-residue protein sequence, read N- to C-terminus: Penicillin-binding protein activator LpoA (613 aa).

Residues Met-1–Gly-29 form the signal peptide. Residue Cys-30 is the site of N-palmitoyl cysteine attachment. Cys-30 carries the S-diacylglycerol cysteine lipid modification.

This sequence belongs to the LpoA family. As to quaternary structure, interacts with PBP1a.

It is found in the cell outer membrane. Regulator of peptidoglycan synthesis that is essential for the function of penicillin-binding protein 1A (PBP1a). This is Penicillin-binding protein activator LpoA from Photobacterium profundum (strain SS9).